Reading from the N-terminus, the 438-residue chain is Phosphoribosylamine--glycine ligase (438 aa).

Positions 108–316 constitute an ATP-grasp domain; the sequence is REFMERNNIP…LLEIAKGIVE (209 aa). ATP is bound at residue 135-194; it reads IDEYGKPVVVKPLGLTGGKGVKVVGYQLKDNEEAKEYAEHIIRKDGKVLIEERTDGVEFT. 3 residues coordinate Mg(2+): glutamine 274, glutamate 286, and asparagine 288. Residues glutamine 274, glutamate 286, and asparagine 288 each contribute to the Mn(2+) site.

Belongs to the GARS family. It depends on Mg(2+) as a cofactor. Mn(2+) is required as a cofactor.

It carries out the reaction 5-phospho-beta-D-ribosylamine + glycine + ATP = N(1)-(5-phospho-beta-D-ribosyl)glycinamide + ADP + phosphate + H(+). It participates in purine metabolism; IMP biosynthesis via de novo pathway; N(1)-(5-phospho-D-ribosyl)glycinamide from 5-phospho-alpha-D-ribose 1-diphosphate: step 2/2. This Pyrococcus horikoshii (strain ATCC 700860 / DSM 12428 / JCM 9974 / NBRC 100139 / OT-3) protein is Phosphoribosylamine--glycine ligase.